The sequence spans 2192 residues: Non-reducing polyketide synthase 1 (2192 aa).

The segment at 5-243 (LLLGDQTADQ…VSIPIYAPYH (239 aa)) is N-terminal acylcarrier protein transacylase domain (SAT). One can recognise a Ketosynthase family 3 (KS3) domain in the interval 374 to 806 (NDKIAIVGMS…GGNTSLLLED (433 aa)). Active-site for beta-ketoacyl synthase activity residues include cysteine 546, histidine 681, and histidine 724. The segment at 905–1218 (FCFTGQGSQY…ANSMCALFLA (314 aa)) is malonyl-CoA:ACP transacylase (MAT) domain. The For acyl/malonyl transferase activity role is filled by serine 993. Residues 1293-1610 (SCQKIIDEEF…RKVLNTFLPP (318 aa)) form a product template (PT) domain region. Residues 1295-1430 (QKIIDEEFSA…CTVKFEDINT (136 aa)) are N-terminal hotdog fold. Residues 1295–1605 (QKIIDEEFSA…FQKIPRKVLN (311 aa)) enclose the PKS/mFAS DH domain. Histidine 1327 acts as the Proton acceptor; for dehydratase activity in catalysis. The segment at 1458–1605 (AHVIGRGLAY…FQKIPRKVLN (148 aa)) is C-terminal hotdog fold. The active-site Proton donor; for dehydratase activity is the aspartate 1518. The interval 1639 to 1668 (TQAQPAKAVPKQVTVAAPTPKAAPKKADLK) is disordered. Residues 1670–1747 (PAGPTIITRV…EMKKFFSQYD (78 aa)) form the Carrier 1 domain. The residue at position 1707 (serine 1707) is an O-(pantetheine 4'-phosphoryl)serine. Residues 1748 to 1788 (GEVGTPEQDDSDSDSETSGDASTPMSEVGTPMTIPSSAVSE) are disordered. A compositionally biased stretch (acidic residues) spans 1754-1764 (EQDDSDSDSET). The Carrier 2 domain occupies 1798 to 1875 (APASGEVSIA…DVENALDMRP (78 aa)). Serine 1835 bears the O-(pantetheine 4'-phosphoryl)serine mark. The thioesterase (TE) domain stretch occupies residues 1913–2164 (SKYPAATSVL…SMMKPPHVSI (252 aa)).

Non-reducing polyketide synthase; part of the gene cluster that mediates the biosynthesis of elsinochromes, pigments consisting of at least four interconvertible tautomers (A, B, C and D) that have a core phenolic quinone to which various side chains are attached and which play an important role in fungal pathogenesis. The non-reducing polyketide synthase PKS1 was proposed to iteratively catalyze decarboxylation between acetyl-CoA and malonyl-CoA subunits for polyketide chain elongation. The released polyketide undergoes cyclization to form an aromatic ring, and proceeds via serial modification steps to produce the heptaketide back- bone of elsinochrome. As elsinochrome has a symmetrical structure, two identical heptaketides are fused to form a core 1,2-dihydrobenzo-perylene ring structure, which can then be successively modified to produce the various derivatives of elsinochrome. Some of these reactions may be cooperatively carried out, at least in part, by the products of RDT1, OXR1 and PKS1. PRF1, embedded within the elsinochrome cluster possibly functions to stabilize some of the biosynthetic enzymes required for elsinochrome production. As prefoldin is a hexamer containing 2 a and 4 b subunits, additional prefoldin subunits, whose coding genes may not immediately link to the elsinochrome biosynthetic gene cluster, are required to fulfill the chaperone function. In addition, no methyltransferase-coding gene exists within the biosynthetic gene cluster, even though elsinochrome has four methyl groups at positions C3, C7, C8 and C12. Apparently, the identified gene cluster does not contain the entire entourage of genes responsible for elsinochrome biosynthesis. Once elsinochrome is synthesized, it must be exported outside the fungal cells, which is probably accomplished by the ECT1 transporter, to avoid toxicity. In Elsinoe fawcettii (Citrus scab fungus), this protein is Non-reducing polyketide synthase 1.